Here is a 213-residue protein sequence, read N- to C-terminus: ATP synthase peripheral stalk subunit OSCP, mitochondrial (213 aa).

A mitochondrion-targeting transit peptide spans 1 to 23; that stretch reads MAAPAVSGVSQQVRYFGTSVVRP. The SIFI-degron signature appears at 5-23; the sequence is AVSGVSQQVRYFGTSVVRP. Lys54, Lys60, Lys70, and Lys73 each carry N6-acetyllysine. Lys90 is subject to N6-succinyllysine. N6-acetyllysine; alternate is present on residues Lys158 and Lys162. Residues Lys158 and Lys162 each carry the N6-succinyllysine; alternate modification. N6-acetyllysine is present on residues Lys172, Lys176, and Lys192. At Lys199 the chain carries N6-succinyllysine.

The protein belongs to the ATPase delta chain family. In terms of assembly, component of the ATP synthase complex composed at least of ATP5F1A/subunit alpha, ATP5F1B/subunit beta, ATP5MC1/subunit c (homooctomer), MT-ATP6/subunit a, MT-ATP8/subunit 8, ATP5ME/subunit e, ATP5MF/subunit f, ATP5MG/subunit g, ATP5MK/subunit k, ATP5MJ/subunit j, ATP5F1C/subunit gamma, ATP5F1D/subunit delta, ATP5F1E/subunit epsilon, ATP5PF/subunit F6, ATP5PB/subunit b, ATP5PD/subunit d, ATP5PO/subunit OSCP. ATP synthase complex consists of a soluble F(1) head domain (subunits alpha(3) and beta(3)) - the catalytic core - and a membrane F(0) domain - the membrane proton channel (subunits c, a, 8, e, f, g, k and j). These two domains are linked by a central stalk (subunits gamma, delta, and epsilon) rotating inside the F1 region and a stationary peripheral stalk (subunits F6, b, d, and OSCP). In terms of processing, acetylation at Lys-162 decreases ATP production. Deacetylated by SIRT3. In response to mitochondrial stress, the precursor protein is ubiquitinated by the SIFI complex in the cytoplasm before mitochondrial import, leading to its degradation. Within the SIFI complex, UBR4 initiates ubiquitin chain that are further elongated or branched by KCMF1.

Its subcellular location is the mitochondrion. The protein localises to the mitochondrion inner membrane. Functionally, subunit OSCP, of the mitochondrial membrane ATP synthase complex (F(1)F(0) ATP synthase or Complex V) that produces ATP from ADP in the presence of a proton gradient across the membrane which is generated by electron transport complexes of the respiratory chain. ATP synthase complex consist of a soluble F(1) head domain - the catalytic core - and a membrane F(1) domain - the membrane proton channel. These two domains are linked by a central stalk rotating inside the F(1) region and a stationary peripheral stalk. During catalysis, ATP synthesis in the catalytic domain of F(1) is coupled via a rotary mechanism of the central stalk subunits to proton translocation. In vivo, can only synthesize ATP although its ATP hydrolase activity can be activated artificially in vitro. Part of the complex F(0) domain. Part of the complex F(0) domain and the peripheric stalk, which acts as a stator to hold the catalytic alpha(3)beta(3) subcomplex and subunit a/ATP6 static relative to the rotary elements. This chain is ATP synthase peripheral stalk subunit OSCP, mitochondrial, found in Callithrix jacchus (White-tufted-ear marmoset).